The sequence spans 126 residues: Small ribosomal subunit protein uS13c (126 aa).

The segment at 95-126 is disordered; that stretch reads GLPLRGQNTRTNARTKRGIKKTMAGKKKAPRK. Residues 107–126 show a composition bias toward basic residues; sequence ARTKRGIKKTMAGKKKAPRK.

It belongs to the universal ribosomal protein uS13 family. As to quaternary structure, part of the 30S ribosomal subunit.

Its subcellular location is the plastid. It localises to the chloroplast. Its function is as follows. Located at the top of the head of the 30S subunit, it contacts several helices of the 16S rRNA. The chain is Small ribosomal subunit protein uS13c from Gracilaria tenuistipitata var. liui (Red alga).